Here is a 565-residue protein sequence, read N- to C-terminus: MDIVALIEKAPEEPGVYIFKNQKHYIYIGKAINIKKRLLQHLKEREQSKKEANIFNHSKELEWIVTRNEYEALLLEMDLIRTHKPKYNVLLKHGSGYPVILLTDDEYPTVKITRDTSEKGEAFGPFLNINKALKIKKLIHATFRLRTCEEMPKRPTPCMDYHLGLCSGPCANLISKEDYAISVKSAKAFLSGNVKDVLPTLYEKIEQYASNLAFEKAAFLRDQVLVLQNIVDGQGVFLYDIEEVDVFYLEGYSLWLFIIRNKRLVAHKEFRLNKELIINYEEMLGTYYMSNIVPKKIVANFELTENFRLFIKSKRKDVAFSNNIPKPLLKIIEKNVVLKPDTKEFESEFYKLFGRKAPKLIECFDISHFQGQYTVGSMVVWEDGSLNKSKYRRYRIKTVDYIDDFASLKEVLSRRAKRIVSKEDQTPDMWLIDGGKGQLSMGIEVKEKFLLNIYICSLAKKEEIIYTEDGLEIPIKNHQALYRVFGLLRDEAHRFAITYNRNLRSKEFIKDTLSKIKGVGKVKKEIIYRHFDSLYDFIKSDDEKLKKLGISKSIKESVKKILGDM.

A GIY-YIG domain is found at 12–89; that stretch reads EEPGVYIFKN…IRTHKPKYNV (78 aa). In terms of domain architecture, UVR spans 195 to 230; the sequence is KDVLPTLYEKIEQYASNLAFEKAAFLRDQVLVLQNI.

Belongs to the UvrC family. In terms of assembly, interacts with UvrB in an incision complex.

Its subcellular location is the cytoplasm. Functionally, the UvrABC repair system catalyzes the recognition and processing of DNA lesions. UvrC both incises the 5' and 3' sides of the lesion. The N-terminal half is responsible for the 3' incision and the C-terminal half is responsible for the 5' incision. The sequence is that of UvrABC system protein C from Hydrogenobaculum sp. (strain Y04AAS1).